Consider the following 596-residue polypeptide: Arginine--tRNA ligase (596 aa).

A 'HIGH' region motif is present at residues 127–137 (ANPTGPVHVGR).

Belongs to the class-I aminoacyl-tRNA synthetase family.

Its subcellular location is the cytoplasm. It carries out the reaction tRNA(Arg) + L-arginine + ATP = L-arginyl-tRNA(Arg) + AMP + diphosphate. In Haloquadratum walsbyi (strain DSM 16790 / HBSQ001), this protein is Arginine--tRNA ligase.